The following is a 48-amino-acid chain: M-oxotoxin-Ot1a (48 aa).

As to expression, expressed by the venom gland.

It localises to the secreted. Its subcellular location is the target cell membrane. Its function is as follows. Disrupts cell membranes, particularly those rich in phosphocholine, through formation of pores. Has antimicrobial activity against Gram-negative bacterium E.coli, Gram-positive bacteria B.subtilis and S.aureus, and hemolytic activity against sheep, pig and guinea pig erythrocytes. Has insecticidal activity against S.frugiperda ovarian cells by opening non-selective ion channels. Enhances the insecticidal activity of spider venom neurotoxic peptides. The chain is M-oxotoxin-Ot1a from Oxyopes takobius (Lynx spider).